Here is a 532-residue protein sequence, read N- to C-terminus: Carboxypeptidase Y (532 aa).

A signal peptide spans 1-20 (MKAFTSLLCGLGLSTTLAKA). Positions 21 to 111 (ISLQRPLGLD…AIENYQLRVN (91 aa)) are cleaved as a propeptide — mediates translocation across the endoplasmic reticulum, renders the enzyme inactive during transit, and targets the molecule to the vacuole. The Vacuolar targeting signal motif lies at 24-27 (QRPL). N-linked (GlcNAc...) (high mannose) asparagine glycans are attached at residues Asn124 and Asn198. Disulfide bonds link Cys167–Cys409, Cys304–Cys318, Cys328–Cys351, Cys335–Cys344, and Cys373–Cys379. Ser257 is a catalytic residue. Asn279 carries an N-linked (GlcNAc...) (high mannose) asparagine glycan. The active site involves Asp449. Substrate is bound at residue Cys452. Asn479 carries N-linked (GlcNAc...) (high mannose) asparagine glycosylation. His508 is an active-site residue. Residue Met509 coordinates substrate.

It belongs to the peptidase S10 family. Post-translationally, enters the endoplasmic reticulum as an inactive zymogen and is modified by four N-linked core oligosaccharides, giving rise to a precursor known as P1 (67 kDa). As P1 transits through the Golgi, extension of its core oligosaccharides leads to the Golgi-modified P2 precursor (69 kDa). P2 is sorted away from secretory proteins at or beyond a late Golgi compartment and is subsequently delivered to the vacuole via a prevacuolar endosome-like compartment. Upon arrival in the vacuole, the N-terminal prosegment of P2 is cleaved by vacuolar proteases to yield the enzymatically active mature vacuolar form of CPY (61 kDa). The four high mannose core N-glycans found in mature CPY are Man(11-15)GlcNAc(2) at Asn-124, Man(8-12)GlcNAc(2) at Asn-198, Man(9-14)GlcNAc(2) at Asn-279 and phosphorylated Man(12-17)GlcNAc(2) as well as Man(11-16)GlcNAc(2) at Asn-479.

Its subcellular location is the vacuole lumen. It carries out the reaction Release of a C-terminal amino acid with broad specificity.. Its activity is regulated as follows. Inhibited by ZPCK. Its function is as follows. Vacuolar serine-type carboxypeptidase involved in degradation of small peptides. Digests preferentially peptides containing an aliphatic or hydrophobic residue in P1' position, as well as methionine, leucine or phenylalanine in P1 position of ester substrate. Also plays a role in breakdown of the autophagic body and the autophagosome-dependent protein synthesis. Plays a key role in phytochelatin (PC) synthesis from glutathione (GSH) by cleaving the Gly from GSH and form the PC-peptides of the structure (gamma-Glu-Cys)2-Gly. Also involved in resistance to xenobiotics via the degradation of glutathione-S-conjugates. This chain is Carboxypeptidase Y, found in Saccharomyces cerevisiae (strain ATCC 204508 / S288c) (Baker's yeast).